We begin with the raw amino-acid sequence, 374 residues long: UPF0754 membrane protein SA1664 (374 aa).

The next 2 membrane-spanning stretches (helical) occupy residues 4–24 and 354–374; these read LFII…TNVI and SLGF…AIFV.

The protein belongs to the UPF0754 family.

The protein resides in the cell membrane. The protein is UPF0754 membrane protein SA1664 of Staphylococcus aureus (strain N315).